Consider the following 275-residue polypeptide: Probable siderophore transport system ATP-binding protein YusV (275 aa).

In terms of domain architecture, ABC transporter spans 6–242 (ISTETLSLGY…DLVQNVFSMN (237 aa)). 38–45 (GSNGCGKS) contributes to the ATP binding site.

Belongs to the ABC transporter superfamily. As to quaternary structure, the iron-hydroxamate siderophore complex is composed of one ATP-binding protein (YusV), two transmembrane proteins (YfiZ and YfhA) and a solute-binding protein (YfiY); the catechoplate siderophore complex is composed of one ATP-binding protein (YusV), two transmembrane proteins (FeuB and FeuC) and a solute-binding protein (FeuA).

The protein localises to the cell membrane. Functionally, provides the ATPase subunit for at least 2 ABC transporter complexes; YfiYZ/YfhA/YusV involved in import of the iron-hydroxamate siderophores schizokinen, arthrobactin and corprogen, and FeuABC/YusV involved in import of the catecholate siderophores bacillibactin and enterobactin. Probably responsible for energy coupling to the transport system. The chain is Probable siderophore transport system ATP-binding protein YusV (yusV) from Bacillus subtilis (strain 168).